The primary structure comprises 585 residues: Arginine--tRNA ligase (585 aa).

The 'HIGH' region signature appears at Ala131 to His141.

The protein belongs to the class-I aminoacyl-tRNA synthetase family. As to quaternary structure, monomer.

Its subcellular location is the cytoplasm. It catalyses the reaction tRNA(Arg) + L-arginine + ATP = L-arginyl-tRNA(Arg) + AMP + diphosphate. This is Arginine--tRNA ligase from Brucella suis (strain ATCC 23445 / NCTC 10510).